A 1068-amino-acid chain; its full sequence is WD repeat-containing protein on Y chromosome (1068 aa).

7 WD repeats span residues 155–199 (DEVT…IRTA), 201–242 (SESI…RGPF), 322–361 (RIPLGVSTFFVAESHNIVVTGGPDTFVRIWDVYIPTEPSA), 365–404 (GHNGGIVLVFVQPEENKVYSVDYQKIIKVWDLHEHTLLQT), 455–494 (THAAPVSVVLYNRLFRNVVSCGLDSYIIVWDPWTGRRKII), 507–546 (IIDIEITAACFDPLEQFLLTGARDGSLKIWNYNNAVVVRN), and 594–634 (FHTD…RRYS). Residues 657–687 (SKRLASRPTPGNHGLQMGRAGRSTVLNRPED) are disordered. WD repeat units follow at residues 746–785 (KTGDCVLTMCTDRKNRYLYTGTAFGYIKVWHIENFCVPET) and 829–868 (GHLKAINSISFINLPKIIFTGSHDYSCRLWTQGGRYLGTL). The interval 1026 to 1068 (SAINIKQPSRRRSDKTNDTRNVRTPRARDLIALEMSSSHASQS) is disordered. A compositionally biased stretch (basic and acidic residues) spans 1039 to 1056 (DKTNDTRNVRTPRARDLI).

This is WD repeat-containing protein on Y chromosome from Drosophila yakuba (Fruit fly).